The sequence spans 503 residues: Maturase K (503 aa).

Belongs to the intron maturase 2 family. MatK subfamily.

It is found in the plastid. Its subcellular location is the chloroplast. Usually encoded in the trnK tRNA gene intron. Probably assists in splicing its own and other chloroplast group II introns. In Eucalyptus globulus (Tasmanian blue gum), this protein is Maturase K.